Consider the following 428-residue polypeptide: Adenylosuccinate synthetase (428 aa).

GTP contacts are provided by residues 12 to 18 (GDEGKGK) and 40 to 42 (GHT). Residue Asp13 is the Proton acceptor of the active site. Positions 13 and 40 each coordinate Mg(2+). Residues 13–16 (DEGK), 38–41 (NAGH), Thr130, Arg144, Gln225, Thr240, and Arg304 each bind IMP. The active-site Proton donor is the His41. A substrate-binding site is contributed by 300 to 306 (VTTGRAR). GTP-binding positions include Arg306, 332 to 334 (KID), and 414 to 416 (SVG).

This sequence belongs to the adenylosuccinate synthetase family. Homodimer. Mg(2+) is required as a cofactor.

It is found in the cytoplasm. The catalysed reaction is IMP + L-aspartate + GTP = N(6)-(1,2-dicarboxyethyl)-AMP + GDP + phosphate + 2 H(+). The protein operates within purine metabolism; AMP biosynthesis via de novo pathway; AMP from IMP: step 1/2. Functionally, plays an important role in the de novo pathway of purine nucleotide biosynthesis. Catalyzes the first committed step in the biosynthesis of AMP from IMP. This chain is Adenylosuccinate synthetase, found in Clostridium acetobutylicum (strain ATCC 824 / DSM 792 / JCM 1419 / IAM 19013 / LMG 5710 / NBRC 13948 / NRRL B-527 / VKM B-1787 / 2291 / W).